The primary structure comprises 268 residues: MSREREGFGEYYETVKKIKKDPAFETTTDHAVMGIRRHVAVPPGTTLNTVTPCAACKLLRRRCAEECPFSPYFSPHEPHKFAAVHKVFGASNVSKMLLEVGESQRGDAANSLVYEANLRLRDPIYGCMGAISALQHHIQSLQSELTTVRTEILRHKYQEATTITSLQNNFNSTTTTSSVSCDQHALASAILLPPPPPPPPTPRPPRLLSSQPAPPPTPPVSLPSPSMVVSSSSSSNSSATNSMYNPPPSSTAGYSNSLSSDNNVHYFD.

Residues 51 to 152 (TPCAACKLLR…SELTTVRTEI (102 aa)) enclose the LOB domain. The disordered stretch occupies residues 191–268 (LLPPPPPPPP…SSDNNVHYFD (78 aa)). Composition is skewed to pro residues over residues 192–205 (LPPP…PRPP) and 212–222 (PAPPPTPPVSL). Positions 223–243 (PSPSMVVSSSSSSNSSATNSM) are enriched in low complexity. Over residues 250 to 268 (STAGYSNSLSSDNNVHYFD) the composition is skewed to polar residues.

This sequence belongs to the LOB domain-containing protein family. Expressed in shoots and roots and at low levels in flowers, but not in leaves or inflorescence stems.

In Arabidopsis thaliana (Mouse-ear cress), this protein is LOB domain-containing protein 13 (LBD13).